The following is a 336-amino-acid chain: MTVSLEGLYRGESLTSEQTEQLFGELLRGEMDPIVLSSLLTAMKVKGESPSEIEGAARALIAAAKPFPRPDYEFCDIVGTGGDGLYTINISSTAAIVGATCGIKVAKHGNRSVSSKTGSSDLLEKLGIKLDMSPETARHCLDEANICFLFAPHYHSGMRFAAPVRQALKTRTIFNVLGPLINPARPTYQLMGVYSPDLLEPIAETLHALGLKKGMVAYGSGLDEIAVHGETQVAEINDGHIRYYTLTPTDFGLKYYPLESIQGGTPDENRKITETLLAGKGTDAQQAAIAINLAPLLKMGGLVDTLKQGAEMAIETLRSGDALDKVTQLATLSHKE.

Residues G79, 82 to 83 (GD), T87, 89 to 92 (NISS), 107 to 115 (KHGNRSVSS), and S119 each bind 5-phospho-alpha-D-ribose 1-diphosphate. G79 serves as a coordination point for anthranilate. S91 lines the Mg(2+) pocket. Residue N110 participates in anthranilate binding. R165 provides a ligand contact to anthranilate. Mg(2+)-binding residues include D223 and E224.

The protein belongs to the anthranilate phosphoribosyltransferase family. Homodimer. It depends on Mg(2+) as a cofactor.

It carries out the reaction N-(5-phospho-beta-D-ribosyl)anthranilate + diphosphate = 5-phospho-alpha-D-ribose 1-diphosphate + anthranilate. The protein operates within amino-acid biosynthesis; L-tryptophan biosynthesis; L-tryptophan from chorismate: step 2/5. In terms of biological role, catalyzes the transfer of the phosphoribosyl group of 5-phosphorylribose-1-pyrophosphate (PRPP) to anthranilate to yield N-(5'-phosphoribosyl)-anthranilate (PRA). This Tolumonas auensis (strain DSM 9187 / NBRC 110442 / TA 4) protein is Anthranilate phosphoribosyltransferase.